A 212-amino-acid polypeptide reads, in one-letter code: Mediator of RNA polymerase II transcription subunit 20 (212 aa).

It belongs to the Mediator complex subunit 20 family. In terms of assembly, component of the Mediator complex, which is composed of MED1, MED4, MED6, MED7, MED8, MED9, MED10, MED11, MED12, MED13, MED13L, MED14, MED15, MED16, MED17, MED18, MED19, MED20, MED21, MED22, MED23, MED24, MED25, MED26, MED27, MED29, MED30, MED31, CCNC, CDK8 and CDC2L6/CDK11. The MED12, MED13, CCNC and CDK8 subunits form a distinct module termed the CDK8 module. Mediator containing the CDK8 module is less active than Mediator lacking this module in supporting transcriptional activation. Individual preparations of the Mediator complex lacking one or more distinct subunits have been variously termed ARC, CRSP, DRIP, PC2, SMCC and TRAP. Interacts with PPARG.

It is found in the nucleus. In terms of biological role, component of the Mediator complex, a coactivator involved in the regulated transcription of nearly all RNA polymerase II-dependent genes. Mediator functions as a bridge to convey information from gene-specific regulatory proteins to the basal RNA polymerase II transcription machinery. Mediator is recruited to promoters by direct interactions with regulatory proteins and serves as a scaffold for the assembly of a functional preinitiation complex with RNA polymerase II and the general transcription factors. The sequence is that of Mediator of RNA polymerase II transcription subunit 20 (MED20) from Macaca fascicularis (Crab-eating macaque).